We begin with the raw amino-acid sequence, 366 residues long: Endophilin-A (366 aa).

A BAR domain is found at 18–248 (TEKMGGAEGT…LQEKRSEAES (231 aa)). The stretch at 227-247 (QCADVLRGLQETLQEKRSEAE) forms a coiled coil. The tract at residues 266–295 (GGGGGLNEDGTPSHISSSASPLPSPMRSPA) is disordered. Residues 277 to 294 (PSHISSSASPLPSPMRSP) are compositionally biased toward low complexity. Residues 305-364 (QQQPCCQALYDFDPENPGELGFKENDIITLLNRVDDNWYEGSVNGRTGYFPQSYVQVQVP) form the SH3 domain.

The protein belongs to the endophilin family.

It is found in the cytoplasm. The protein localises to the membrane. In terms of biological role, required presynaptically at the neuromuscular junction. Implicated in synaptic vesicle endocytosis. This chain is Endophilin-A, found in Drosophila willistoni (Fruit fly).